A 313-amino-acid chain; its full sequence is Heterogeneous nuclear ribonucleoproteins C1/C2 (313 aa).

Position 2 is an N-acetylalanine (Ala-2). Residues Lys-8, Lys-50, Lys-89, and Lys-94 each participate in a glycyl lysine isopeptide (Lys-Gly) (interchain with G-Cter in SUMO2) cross-link. Residues 16–87 form the RRM domain; it reads SRVFIGNLNT…QVLDINLAAE (72 aa). Phosphoserine occurs at positions 113, 115, and 121. Disordered regions lie at residues 139–191 and 219–313; these read YPAR…KLKG and EKEQ…EDDS. A Nuclear localization signal motif is present at residues 155–161; sequence PSKRQRV. Residues Ser-162 and Ser-166 each carry the phosphoserine modification. A compositionally biased stretch (low complexity) spans 175–186; it reads SKSGQRGSSSKS. An N6-acetyllysine; alternate modification is found at Lys-176. A Glycyl lysine isopeptide (Lys-Gly) (interchain with G-Cter in SUMO2); alternate cross-link involves residue Lys-176. Positions 191-226 form a coiled coil; it reads GDDLQAIKKELTQIKQKVDSLLESLEKIEKEQSKQA. A Glycyl lysine isopeptide (Lys-Gly) (interchain with G-Cter in SUMO2) cross-link involves residue Lys-224. Phosphoserine occurs at positions 229, 231, and 232. A Glycyl lysine isopeptide (Lys-Gly) (interchain with G-Cter in SUMO2) cross-link involves residue Lys-237. Residue Lys-240 forms a Glycyl lysine isopeptide (Lys-Gly) (interchain with G-Cter in SUMO2); alternate linkage. Residue Lys-240 forms a Glycyl lysine isopeptide (Lys-Gly) (interchain with G-Cter in SUMO1); alternate linkage. 4 positions are modified to phosphoserine: Ser-241, Ser-246, Ser-247, and Ser-249. Basic and acidic residues predominate over residues 250–261; that stretch reads VKKDETNVKMES. Residues Lys-251 and Lys-252 each participate in a glycyl lysine isopeptide (Lys-Gly) (interchain with G-Cter in SUMO2) cross-link. Lys-258 is covalently cross-linked (Glycyl lysine isopeptide (Lys-Gly) (interchain with G-Cter in SUMO2); alternate). Lys-258 participates in a covalent cross-link: Glycyl lysine isopeptide (Lys-Gly) (interchain with G-Cter in SUMO); alternate. 2 positions are modified to phosphoserine: Ser-261 and Ser-268. The segment covering 263-284 has biased composition (acidic residues); sequence AGADDSAEEGDLLDDDDNEDRG. The span at 285 to 294 shows a compositional bias: basic and acidic residues; that stretch reads DDQLELKDDE. The span at 295–313 shows a compositional bias: acidic residues; that stretch reads KEPEEGEDDRDSANGEDDS. Residues Ser-306 and Ser-313 each carry the phosphoserine modification.

It belongs to the RRM HNRPC family. RALY subfamily. In terms of assembly, tetramer composed of 3 copies of isoform C1 and 1 copy of isoform C2. Assembly of 3 tetramers with bound pre-mRNA gives rise to a 19S complex that interacts with HNRNPA2B1 tetramers. Component of the 40S hnRNP particle. Identified in the spliceosome C complex. Interacts with IGF2BP1. Interacts with DHX9; this interaction is direct, enhanced probably by their concomitant binding to RNA and mediates the attachment to actin filaments. Interacts with PPIA/CYPA. In terms of processing, phosphorylated on Ser-268 and Ser-306 in resting cells. Sumoylated. Sumoylation reduces affinity for mRNA. Post-translationally, ubiquitinated and degraded after nucleo-cytoplasmic transport by YWHAE.

It localises to the nucleus. Binds pre-mRNA and nucleates the assembly of 40S hnRNP particles. Interacts with poly-U tracts in the 3'-UTR or 5'-UTR of mRNA and modulates the stability and the level of translation of bound mRNA molecules. Single HNRNPC tetramers bind 230-240 nucleotides. Trimers of HNRNPC tetramers bind 700 nucleotides. May play a role in the early steps of spliceosome assembly and pre-mRNA splicing. N6-methyladenosine (m6A) has been shown to alter the local structure in mRNAs and long non-coding RNAs (lncRNAs) via a mechanism named 'm(6)A-switch', facilitating binding of HNRNPC, leading to regulation of mRNA splicing. The protein is Heterogeneous nuclear ribonucleoproteins C1/C2 (Hnrnpc) of Mus musculus (Mouse).